We begin with the raw amino-acid sequence, 308 residues long: tRNA dimethylallyltransferase (308 aa).

19 to 26 (GPTASGKS) lines the ATP pocket. 21-26 (TASGKS) contributes to the substrate binding site. The interval 44-47 (DSMQ) is interaction with substrate tRNA.

The protein belongs to the IPP transferase family. In terms of assembly, monomer. Requires Mg(2+) as cofactor.

It carries out the reaction adenosine(37) in tRNA + dimethylallyl diphosphate = N(6)-dimethylallyladenosine(37) in tRNA + diphosphate. Its function is as follows. Catalyzes the transfer of a dimethylallyl group onto the adenine at position 37 in tRNAs that read codons beginning with uridine, leading to the formation of N6-(dimethylallyl)adenosine (i(6)A). The chain is tRNA dimethylallyltransferase from Methylobacterium radiotolerans (strain ATCC 27329 / DSM 1819 / JCM 2831 / NBRC 15690 / NCIMB 10815 / 0-1).